Reading from the N-terminus, the 305-residue chain is Hepatitis A virus cellular receptor 1 homolog (305 aa).

The N-terminal stretch at 1 to 21 is a signal peptide; it reads MNQIQVFISGLILLLPGAVDS. Positions 22-122 constitute an Ig-like V-type domain; that stretch reads YVEVKGVVGH…PGWFNDQKVT (101 aa). Topologically, residues 22-237 are extracellular; it reads YVEVKGVVGH…GKPQKNPTKG (216 aa). 3 cysteine pairs are disulfide-bonded: cysteine 37-cysteine 108, cysteine 49-cysteine 60, and cysteine 55-cysteine 107. Residues 129–185 form a disordered region; sequence PEIPTRPPTRPTTTRPTATGRPTTISTRSTHVPTSIRVSTSTPPTSTHTWTHKPEPT. 2 stretches are compositionally biased toward low complexity: residues 139 to 152 and 161 to 177; these read PTTTRPTATGRPTT and PTSIRVSTSTPPTSTHT. An N-linked (GlcNAc...) asparagine glycan is attached at asparagine 208. Residues 238–258 form a helical membrane-spanning segment; sequence FYVGICIAALLLLLLVSTVAI. The Cytoplasmic segment spans residues 259 to 305; it reads TRYILMKRKSASLSVVAFRVSKIEALQNAAVVHSRAEDNIYIVEDRP.

The protein belongs to the immunoglobulin superfamily. TIM family. In terms of assembly, interacts with STAM. Interacts with SELPLG. As to expression, expressed by stimulated T-cells. Expressed during primary antigen stimulation. Expressed at higher levels on B rather than T-cells, both constitutively and after activation.

The protein resides in the cell membrane. Functionally, phosphatidylserine receptor that plays an important functional role in regulatory B-cells homeostasis including generation, expansion and suppressor functions. As P-selectin/SELPLG ligand, plays a specialized role in activated but not naive T-cell trafficking during inflammatory responses. Controls thereby T-cell accumulation in the inflamed central nervous system (CNS) and the induction of autoimmune disease. Also regulates expression of various anti-inflammatory cytokines and co-inhibitory ligands including IL10. Acts as a regulator of T-cell proliferation. May play a role in kidney injury and repair. The chain is Hepatitis A virus cellular receptor 1 homolog (Havcr1) from Mus musculus (Mouse).